The following is a 372-amino-acid chain: Glutamate 5-kinase (372 aa).

Lysine 14 contributes to the ATP binding site. Substrate is bound by residues serine 55, aspartate 142, and asparagine 154. Residues 174–175 (SD) and 216–222 (TGGMETK) each bind ATP. In terms of domain architecture, PUA spans 279-357 (QGSIIVDLGA…WEIADVLGHK (79 aa)).

It belongs to the glutamate 5-kinase family.

It is found in the cytoplasm. It carries out the reaction L-glutamate + ATP = L-glutamyl 5-phosphate + ADP. It functions in the pathway amino-acid biosynthesis; L-proline biosynthesis; L-glutamate 5-semialdehyde from L-glutamate: step 1/2. Catalyzes the transfer of a phosphate group to glutamate to form L-glutamate 5-phosphate. The chain is Glutamate 5-kinase from Carboxydothermus hydrogenoformans (strain ATCC BAA-161 / DSM 6008 / Z-2901).